A 277-amino-acid polypeptide reads, in one-letter code: Large ribosomal subunit protein uL2 (277 aa).

Disordered regions lie at residues 32-58 (KSLT…RGGG) and 225-277 (VAMN…RRNK). Positions 258–277 (YKTRKKKRYSDKFIIKRRNK) are enriched in basic residues.

The protein belongs to the universal ribosomal protein uL2 family. As to quaternary structure, part of the 50S ribosomal subunit. Forms a bridge to the 30S subunit in the 70S ribosome.

One of the primary rRNA binding proteins. Required for association of the 30S and 50S subunits to form the 70S ribosome, for tRNA binding and peptide bond formation. It has been suggested to have peptidyltransferase activity; this is somewhat controversial. Makes several contacts with the 16S rRNA in the 70S ribosome. This chain is Large ribosomal subunit protein uL2, found in Borreliella afzelii (strain PKo) (Borrelia afzelii).